The chain runs to 107 residues: Defensin-like protein 242 (107 aa).

Residues 1-22 (MKVVAIFLASCVLFSLIPTHLS) form the signal peptide. 4 disulfide bridges follow: C45–C100, C55–C84, C65–C94, and C82–C96.

Belongs to the DEFL family.

The protein resides in the secreted. The polypeptide is Defensin-like protein 242 (SCRL10) (Arabidopsis thaliana (Mouse-ear cress)).